The sequence spans 629 residues: 1-deoxy-D-xylulose-5-phosphate synthase (629 aa).

Thiamine diphosphate-binding positions include His72 and 113–115 (GHA). Asp144 contributes to the Mg(2+) binding site. Residues 145-146 (GA), Asn174, Tyr287, and Glu370 each bind thiamine diphosphate. Asn174 serves as a coordination point for Mg(2+).

It belongs to the transketolase family. DXPS subfamily. In terms of assembly, homodimer. Requires Mg(2+) as cofactor. Thiamine diphosphate serves as cofactor.

The catalysed reaction is D-glyceraldehyde 3-phosphate + pyruvate + H(+) = 1-deoxy-D-xylulose 5-phosphate + CO2. The protein operates within metabolic intermediate biosynthesis; 1-deoxy-D-xylulose 5-phosphate biosynthesis; 1-deoxy-D-xylulose 5-phosphate from D-glyceraldehyde 3-phosphate and pyruvate: step 1/1. In terms of biological role, catalyzes the acyloin condensation reaction between C atoms 2 and 3 of pyruvate and glyceraldehyde 3-phosphate to yield 1-deoxy-D-xylulose-5-phosphate (DXP). This Prochlorococcus marinus (strain AS9601) protein is 1-deoxy-D-xylulose-5-phosphate synthase.